The sequence spans 865 residues: DNA mismatch repair protein MutS (865 aa).

605–612 (GPNMAGKS) is an ATP binding site. The tract at residues 814 to 833 (PEPLEAYKPKGNKQPLSDEE) is disordered.

This sequence belongs to the DNA mismatch repair MutS family.

Functionally, this protein is involved in the repair of mismatches in DNA. It is possible that it carries out the mismatch recognition step. This protein has a weak ATPase activity. The polypeptide is DNA mismatch repair protein MutS (Halalkalibacterium halodurans (strain ATCC BAA-125 / DSM 18197 / FERM 7344 / JCM 9153 / C-125) (Bacillus halodurans)).